The following is a 385-amino-acid chain: S-adenosylmethionine synthase (385 aa).

His16 serves as a coordination point for ATP. Asp18 is a binding site for Mg(2+). A K(+)-binding site is contributed by Glu44. Positions 57 and 100 each coordinate L-methionine. The tract at residues 100-110 is flexible loop; the sequence is QSPDINQGVDR. Residues 164-166, 230-231, Asp239, 245-246, Ala262, and Lys266 each bind ATP; these read DGK, KF, and RK. Residue Asp239 participates in L-methionine binding. Residue Lys270 participates in L-methionine binding.

This sequence belongs to the AdoMet synthase family. Homotetramer; dimer of dimers. Mg(2+) serves as cofactor. It depends on K(+) as a cofactor.

It is found in the cytoplasm. The enzyme catalyses L-methionine + ATP + H2O = S-adenosyl-L-methionine + phosphate + diphosphate. Its pathway is amino-acid biosynthesis; S-adenosyl-L-methionine biosynthesis; S-adenosyl-L-methionine from L-methionine: step 1/1. Catalyzes the formation of S-adenosylmethionine (AdoMet) from methionine and ATP. The overall synthetic reaction is composed of two sequential steps, AdoMet formation and the subsequent tripolyphosphate hydrolysis which occurs prior to release of AdoMet from the enzyme. This chain is S-adenosylmethionine synthase, found in Helicobacter pylori (strain G27).